A 160-amino-acid polypeptide reads, in one-letter code: Xanthine-guanine phosphoribosyltransferase (160 aa).

5-phospho-alpha-D-ribose 1-diphosphate contacts are provided by residues 41 to 42 and 93 to 101; these read RG and DDLVDTGRT. Asp94 serves as a coordination point for Mg(2+). Guanine contacts are provided by Asp97 and Ile140. Residues Asp97 and Ile140 each contribute to the xanthine site. GMP is bound by residues 97-101 and 139-140; these read DTGRT and WI.

Belongs to the purine/pyrimidine phosphoribosyltransferase family. XGPT subfamily. Homotetramer. Mg(2+) serves as cofactor.

Its subcellular location is the cell inner membrane. It catalyses the reaction GMP + diphosphate = guanine + 5-phospho-alpha-D-ribose 1-diphosphate. It carries out the reaction XMP + diphosphate = xanthine + 5-phospho-alpha-D-ribose 1-diphosphate. The catalysed reaction is IMP + diphosphate = hypoxanthine + 5-phospho-alpha-D-ribose 1-diphosphate. Its pathway is purine metabolism; GMP biosynthesis via salvage pathway; GMP from guanine: step 1/1. It participates in purine metabolism; XMP biosynthesis via salvage pathway; XMP from xanthine: step 1/1. In terms of biological role, purine salvage pathway enzyme that catalyzes the transfer of the ribosyl-5-phosphate group from 5-phospho-alpha-D-ribose 1-diphosphate (PRPP) to the N9 position of the 6-oxopurines guanine and xanthine to form the corresponding ribonucleotides GMP (guanosine 5'-monophosphate) and XMP (xanthosine 5'-monophosphate), with the release of PPi. To a lesser extent, also acts on hypoxanthine. In Desulfotalea psychrophila (strain LSv54 / DSM 12343), this protein is Xanthine-guanine phosphoribosyltransferase.